Consider the following 105-residue polypeptide: Small ribosomal subunit protein uS10 (105 aa).

Belongs to the universal ribosomal protein uS10 family. Part of the 30S ribosomal subunit.

Involved in the binding of tRNA to the ribosomes. This is Small ribosomal subunit protein uS10 from Lawsonia intracellularis (strain PHE/MN1-00).